Consider the following 388-residue polypeptide: Succinate--CoA ligase [ADP-forming] subunit beta (388 aa).

Residues 9–244 enclose the ATP-grasp domain; it reads KQIFAEYQLP…PSQEDPREAL (236 aa). ATP is bound by residues lysine 46, 53–55, glutamate 99, serine 102, and glutamate 107; that span reads GRG. Mg(2+) is bound by residues asparagine 199 and aspartate 213. Substrate contacts are provided by residues asparagine 264 and 321-323; that span reads GIV.

Belongs to the succinate/malate CoA ligase beta subunit family. In terms of assembly, heterotetramer of two alpha and two beta subunits. Mg(2+) serves as cofactor.

The enzyme catalyses succinate + ATP + CoA = succinyl-CoA + ADP + phosphate. The catalysed reaction is GTP + succinate + CoA = succinyl-CoA + GDP + phosphate. Its pathway is carbohydrate metabolism; tricarboxylic acid cycle; succinate from succinyl-CoA (ligase route): step 1/1. In terms of biological role, succinyl-CoA synthetase functions in the citric acid cycle (TCA), coupling the hydrolysis of succinyl-CoA to the synthesis of either ATP or GTP and thus represents the only step of substrate-level phosphorylation in the TCA. The beta subunit provides nucleotide specificity of the enzyme and binds the substrate succinate, while the binding sites for coenzyme A and phosphate are found in the alpha subunit. In Pasteurella multocida (strain Pm70), this protein is Succinate--CoA ligase [ADP-forming] subunit beta.